The chain runs to 400 residues: Cytochrome b (400 aa).

A helical membrane pass occupies residues Leu-47 to Met-67. Heme b-binding residues include His-97 and His-111. The next 8 membrane-spanning stretches (helical) occupy residues Ala-98–Tyr-118, Ile-131–Trp-151, Phe-166–Val-186, Phe-194–Val-214, Phe-247–Tyr-267, Leu-306–Asp-326, Ile-341–Ala-361, and Ile-368–Gly-388. Residues His-198 and His-212 each contribute to the heme b site.

This sequence belongs to the cytochrome b family. The main subunits of complex b-c1 are: cytochrome b, cytochrome c1 and the Rieske protein. Requires heme b as cofactor.

It is found in the cell membrane. In terms of biological role, component of the ubiquinol-cytochrome c reductase complex (complex III or cytochrome b-c1 complex), which is a respiratory chain that generates an electrochemical potential coupled to ATP synthesis. The polypeptide is Cytochrome b (petB) (Rickettsia bellii (strain RML369-C)).